A 201-amino-acid chain; its full sequence is MIKLIVGLGNPGAEYTATRHNAGFWLVDQLAREAGATLRDERRFHGFYAKARLFGEEVHLLEPQTYMNRSGQAVVALAHFFKILPTEILVAHDELDLPPGAAKLKLGSGSGGHNGLKDISAHLSSQQYWRLRIGIGHPRDLIPESARAGAKPDVANFVLKPPRKDEQDLIDAAIERALAVMPTAIKGETERAMMQLHRNGA.

Y15 serves as a coordination point for tRNA. H20 functions as the Proton acceptor in the catalytic mechanism. Y66, N68, and N114 together coordinate tRNA.

The protein belongs to the PTH family. Monomer.

The protein localises to the cytoplasm. The catalysed reaction is an N-acyl-L-alpha-aminoacyl-tRNA + H2O = an N-acyl-L-amino acid + a tRNA + H(+). Hydrolyzes ribosome-free peptidyl-tRNAs (with 1 or more amino acids incorporated), which drop off the ribosome during protein synthesis, or as a result of ribosome stalling. Its function is as follows. Catalyzes the release of premature peptidyl moieties from peptidyl-tRNA molecules trapped in stalled 50S ribosomal subunits, and thus maintains levels of free tRNAs and 50S ribosomes. The sequence is that of Peptidyl-tRNA hydrolase from Burkholderia mallei (strain ATCC 23344).